We begin with the raw amino-acid sequence, 49 residues long: MRSRVISSGRISQYSKLRNLVLYPSNTGPSNNRPCAGALGMYFLGPALK.

This is an uncharacterized protein from Saccharomyces cerevisiae (strain ATCC 204508 / S288c) (Baker's yeast).